The chain runs to 447 residues: Tubulin beta-5 chain (447 aa).

GTP-binding residues include Gln-11, Glu-69, Ser-138, Gly-142, Thr-143, Gly-144, Asn-204, and Asn-226. Glu-69 contributes to the Mg(2+) binding site. The segment at 421–447 (EYQQYQDATADDEEEDYGDEEEDEVAA) is disordered. Residues 429-447 (TADDEEEDYGDEEEDEVAA) are compositionally biased toward acidic residues.

The protein belongs to the tubulin family. In terms of assembly, dimer of alpha and beta chains. A typical microtubule is a hollow water-filled tube with an outer diameter of 25 nm and an inner diameter of 15 nM. Alpha-beta heterodimers associate head-to-tail to form protofilaments running lengthwise along the microtubule wall with the beta-tubulin subunit facing the microtubule plus end conferring a structural polarity. Microtubules usually have 13 protofilaments but different protofilament numbers can be found in some organisms and specialized cells. Mg(2+) serves as cofactor. In terms of tissue distribution, expressed in roots, leaf sheaths, and suspension cultured cells.

It localises to the cytoplasm. The protein localises to the cytoskeleton. Functionally, tubulin is the major constituent of microtubules, a cylinder consisting of laterally associated linear protofilaments composed of alpha- and beta-tubulin heterodimers. Microtubules grow by the addition of GTP-tubulin dimers to the microtubule end, where a stabilizing cap forms. Below the cap, tubulin dimers are in GDP-bound state, owing to GTPase activity of alpha-tubulin. In Oryza sativa subsp. japonica (Rice), this protein is Tubulin beta-5 chain (TUBB5).